The chain runs to 1098 residues: Sister-chromatid cohesion protein 3 (1098 aa).

The disordered stretch occupies residues M1–N68. A coiled-coil region spans residues R245–D265. Positions F275–M360 constitute an SCD domain. 3 coiled-coil regions span residues K632 to D653, L888 to E908, and L1009 to R1032. The interval E1027–L1077 is disordered. Residues R1040–D1050 are compositionally biased toward basic and acidic residues.

The protein belongs to the SCC3 family. Part of the cohesin complex. Interacts with DEK3. In terms of tissue distribution, expressed in roots, mature leaves, buds and seedlings.

The protein localises to the nucleus. Its subcellular location is the chromosome. Essential component of cohesin complex, a complex required for the cohesion of sister chromatids after DNA replication. The cohesin complex apparently forms a large proteinaceous ring within which sister chromatids can be trapped. At anaphase, the complex is cleaved and dissociates from chromatin, allowing sister chromatids to segregate. The cohesin complex may also play a role in spindle pole assembly during mitosis. Required for centromere cohesion maintenance at anaphase I and for the monopolar orientation of the kinetochores during both male and female meiosis. Also involved in mitosis. This is Sister-chromatid cohesion protein 3 from Arabidopsis thaliana (Mouse-ear cress).